The following is a 238-amino-acid chain: tRNA (guanine-N(7)-)-methyltransferase (238 aa).

S-adenosyl-L-methionine-binding residues include E68, E93, D120, and D143. Residue D143 is part of the active site. Substrate-binding positions include K147, D179, and 216 to 219 (TKFE).

This sequence belongs to the class I-like SAM-binding methyltransferase superfamily. TrmB family.

It catalyses the reaction guanosine(46) in tRNA + S-adenosyl-L-methionine = N(7)-methylguanosine(46) in tRNA + S-adenosyl-L-homocysteine. It participates in tRNA modification; N(7)-methylguanine-tRNA biosynthesis. Catalyzes the formation of N(7)-methylguanine at position 46 (m7G46) in tRNA. This is tRNA (guanine-N(7)-)-methyltransferase from Shewanella sp. (strain MR-4).